Here is a 661-residue protein sequence, read N- to C-terminus: Peroxisomal acyl-coenzyme A oxidase 1 (661 aa).

N6-succinyllysine is present on residues lysine 89 and lysine 90. Position 139 (threonine 139) interacts with FAD. Lysine 159 carries the N6-succinyllysine modification. Residue glycine 178 participates in FAD binding. Lysine 216 carries the N6-acetyllysine modification. Lysine 241 is subject to N6-succinyllysine. N6-acetyllysine is present on residues lysine 255, lysine 267, and lysine 272. Lysine 349 is modified (N6-succinyllysine). Glutamate 421 acts as the Proton acceptor in catalysis. Residues lysine 437, lysine 446, lysine 512, and lysine 637 each carry the N6-acetyllysine; alternate modification. N6-succinyllysine; alternate is present on residues lysine 437, lysine 446, lysine 512, and lysine 637. At lysine 643 the chain carries N6-succinyllysine. Residue serine 649 is modified to Phosphoserine. Lysine 652 is subject to N6-acetyllysine. An N6-succinyllysine modification is found at lysine 655. A Microbody targeting signal motif is present at residues 659 to 661; that stretch reads SKL.

The protein belongs to the acyl-CoA oxidase family. In terms of assembly, homodimer. Interacts with LONP2. FAD is required as a cofactor.

It localises to the peroxisome. It carries out the reaction a 2,3-saturated acyl-CoA + O2 = a (2E)-enoyl-CoA + H2O2. The enzyme catalyses hexadecanoyl-CoA + O2 = (2E)-hexadecenoyl-CoA + H2O2. It catalyses the reaction dodecanoyl-CoA + O2 = (2E)-dodecenoyl-CoA + H2O2. The catalysed reaction is octanoyl-CoA + O2 = (2E)-octenoyl-CoA + H2O2. It carries out the reaction decanoyl-CoA + O2 = (2E)-decenoyl-CoA + H2O2. The enzyme catalyses tetradecanoyl-CoA + O2 = (2E)-tetradecenoyl-CoA + H2O2. It catalyses the reaction hexadecanedioyl-CoA + O2 = (2E)-hexadecenedioyl-CoA + H2O2. The catalysed reaction is tetracosanoyl-CoA + O2 = (2E)-tetracosenoyl-CoA + H2O2. It carries out the reaction glutaryl-CoA + O2 = (2E)-glutaconyl-CoA + H2O2. The enzyme catalyses hexanoyl-CoA + O2 = (2E)-hexenoyl-CoA + H2O2. It catalyses the reaction octadecanoyl-CoA + O2 = (2E)-octadecenoyl-CoA + H2O2. The catalysed reaction is (5Z,8Z,11Z,14Z,17Z)-eicosapentaenoyl-CoA + O2 = (2E,5Z,8Z,11Z,14Z,17Z)-icosahexaenoyl-CoA + H2O2. It carries out the reaction (6Z,9Z,12Z,15Z,18Z,21Z)-tetracosahexaenoyl-CoA + O2 = (2E,6Z,9Z,12Z,15Z,18Z,21Z)-tetracosaheptaenoyl-CoA + H2O2. The protein operates within lipid metabolism; peroxisomal fatty acid beta-oxidation. Involved in the initial and rate-limiting step of peroxisomal beta-oxidation of straight-chain saturated and unsaturated very-long-chain fatty acids. Catalyzes the desaturation of fatty acyl-CoAs such as palmitoyl-CoA (hexadecanoyl-CoA) to 2-trans-enoyl-CoAs ((2E)-enoyl-CoAs) such as (2E)-hexadecenoyl-CoA, and donates electrons directly to molecular oxygen (O(2)), thereby producing hydrogen peroxide (H(2)O(2)). Isoform 2 shows higher activity with hexadecanoyl-CoA as substrate than isoform 1. The chain is Peroxisomal acyl-coenzyme A oxidase 1 (ACOX1) from Phascolarctos cinereus (Koala).